The primary structure comprises 127 residues: Glycine cleavage system H protein (127 aa).

The 82-residue stretch at 24–105 (TALVGITDFA…YNDGWLVKMK (82 aa)) folds into the Lipoyl-binding domain. The residue at position 65 (Lys-65) is an N6-lipoyllysine.

The protein belongs to the GcvH family. In terms of assembly, the glycine cleavage system is composed of four proteins: P, T, L and H. It depends on (R)-lipoate as a cofactor.

Functionally, the glycine cleavage system catalyzes the degradation of glycine. The H protein shuttles the methylamine group of glycine from the P protein to the T protein. The protein is Glycine cleavage system H protein of Pelodictyon phaeoclathratiforme (strain DSM 5477 / BU-1).